A 250-amino-acid polypeptide reads, in one-letter code: 1-(5-phosphoribosyl)-5-[(5-phosphoribosylamino)methylideneamino] imidazole-4-carboxamide isomerase (250 aa).

D8 acts as the Proton acceptor in catalysis. D131 acts as the Proton donor in catalysis.

It belongs to the HisA/HisF family.

The protein resides in the cytoplasm. It catalyses the reaction 1-(5-phospho-beta-D-ribosyl)-5-[(5-phospho-beta-D-ribosylamino)methylideneamino]imidazole-4-carboxamide = 5-[(5-phospho-1-deoxy-D-ribulos-1-ylimino)methylamino]-1-(5-phospho-beta-D-ribosyl)imidazole-4-carboxamide. The protein operates within amino-acid biosynthesis; L-histidine biosynthesis; L-histidine from 5-phospho-alpha-D-ribose 1-diphosphate: step 4/9. The chain is 1-(5-phosphoribosyl)-5-[(5-phosphoribosylamino)methylideneamino] imidazole-4-carboxamide isomerase from Paraburkholderia phytofirmans (strain DSM 17436 / LMG 22146 / PsJN) (Burkholderia phytofirmans).